The sequence spans 291 residues: Foldase protein PrsA 2 (291 aa).

The N-terminal stretch at 1 to 20 (MKKKLILGLVMMMALFSLAA) is a signal peptide. C21 is lipidated: N-palmitoyl cysteine. C21 carries S-diacylglycerol cysteine lipidation. The PpiC domain occupies 135-226 (QPDITVSHIL…YGYHIIQMDK (92 aa)).

The protein belongs to the PrsA family.

It localises to the cell membrane. The enzyme catalyses [protein]-peptidylproline (omega=180) = [protein]-peptidylproline (omega=0). Its function is as follows. Plays a major role in protein secretion by helping the post-translocational extracellular folding of several secreted proteins. This Listeria innocua serovar 6a (strain ATCC BAA-680 / CLIP 11262) protein is Foldase protein PrsA 2 (prsA2).